The primary structure comprises 270 residues: Cytosolic Fe-S cluster assembly factor NUBP2 homolog (270 aa).

Residue G21–S28 coordinates ATP. [4Fe-4S] cluster contacts are provided by C195 and C198.

The protein belongs to the Mrp/NBP35 ATP-binding proteins family. NUBP2/CFD1 subfamily. Heterotetramer of 2 NUBP1 and 2 NUBP2 chains. It depends on [4Fe-4S] cluster as a cofactor.

It is found in the cytoplasm. Component of the cytosolic iron-sulfur (Fe/S) protein assembly (CIA) machinery. Required for maturation of extramitochondrial Fe-S proteins. The NUBP1-NUBP2 heterotetramer forms a Fe-S scaffold complex, mediating the de novo assembly of an Fe-S cluster and its transfer to target apoproteins. This Nematostella vectensis (Starlet sea anemone) protein is Cytosolic Fe-S cluster assembly factor NUBP2 homolog.